The chain runs to 814 residues: Testis-specific zinc finger protein topi (814 aa).

10 consecutive C2H2-type zinc fingers follow at residues 228–250, 275–297, 360–382, 429–453, 467–490, 511–533, 539–564, 570–592, 598–620, and 626–649; these read NECTMCDRKFVHASGLVRHMEKH, VKCNSCGRIFYDPQVAFRHGLIH, LQCEFCEYIFADIAELLVHSASH, FVCNVCELKFANTDLLQEHRCTSFH, LPCDFCDVNFEFAHDFLAHSEEKH, YLCDICGKSYTQSSHLWQHLRFH, FVCQEENCDRKFTIRPDLNDHIRKCH, YLCLVCGKRFLTGSVFYQHRLIH, YECEECGKRFYRADALKNHQRIH, and YSCLFCTKTFRQRGDRDKHIRARH. A disordered region spans residues 669 to 705; it reads TAAAQKAQSHNPEQQDNDVAGGASTSDVPSGSGFMST. Polar residues predominate over residues 691–705; sequence ASTSDVPSGSGFMST.

As to quaternary structure, interacts with comr. As to expression, expressed in testis; primary spermatocytes.

Its subcellular location is the nucleus. In terms of biological role, required for male meiotic division and spermatid differentiation. Required for accumulation of aly and comr on chromatin. May function as a transcription factor. The protein is Testis-specific zinc finger protein topi (topi) of Drosophila melanogaster (Fruit fly).